The sequence spans 716 residues: Fatty acid oxidation complex subunit alpha (716 aa).

An enoyl-CoA hydratase/isomerase region spans residues 1 to 189 (MIYQSPTIQV…KVGAVDAVVA (189 aa)). Residue Asp296 participates in substrate binding. The segment at 311–716 (KDVKSAAVLG…AANNGSYYQA (406 aa)) is 3-hydroxyacyl-CoA dehydrogenase. Residues Met324, Asp343, 400–402 (VVE), Lys407, and Ser429 contribute to the NAD(+) site. His450 (for 3-hydroxyacyl-CoA dehydrogenase activity) is an active-site residue. Position 453 (Asn453) interacts with NAD(+). Substrate-binding residues include Asn500 and Tyr660.

In the N-terminal section; belongs to the enoyl-CoA hydratase/isomerase family. The protein in the C-terminal section; belongs to the 3-hydroxyacyl-CoA dehydrogenase family. In terms of assembly, heterotetramer of two alpha chains (FadB) and two beta chains (FadA).

The enzyme catalyses a (3S)-3-hydroxyacyl-CoA + NAD(+) = a 3-oxoacyl-CoA + NADH + H(+). It carries out the reaction a (3S)-3-hydroxyacyl-CoA = a (2E)-enoyl-CoA + H2O. The catalysed reaction is a 4-saturated-(3S)-3-hydroxyacyl-CoA = a (3E)-enoyl-CoA + H2O. It catalyses the reaction (3S)-3-hydroxybutanoyl-CoA = (3R)-3-hydroxybutanoyl-CoA. The enzyme catalyses a (3Z)-enoyl-CoA = a 4-saturated (2E)-enoyl-CoA. It carries out the reaction a (3E)-enoyl-CoA = a 4-saturated (2E)-enoyl-CoA. It participates in lipid metabolism; fatty acid beta-oxidation. Involved in the aerobic and anaerobic degradation of long-chain fatty acids via beta-oxidation cycle. Catalyzes the formation of 3-oxoacyl-CoA from enoyl-CoA via L-3-hydroxyacyl-CoA. It can also use D-3-hydroxyacyl-CoA and cis-3-enoyl-CoA as substrate. This Shewanella sp. (strain MR-7) protein is Fatty acid oxidation complex subunit alpha.